The following is a 746-amino-acid chain: Alpha-1,4-glucan:maltose-1-phosphate maltosyltransferase (746 aa).

The tract at residues 1–43 is disordered; that stretch reads MAAVQHRATTRTSNTDNSTTKTKSKATSARKSPATKRKRVSAE. The segment covering 10 to 32 has biased composition (low complexity); it reads TRTSNTDNSTTKTKSKATSARKS. Alpha-maltose 1-phosphate contacts are provided by K343, Q403, and D438. The Nucleophile role is filled by D473. Position 474 (N474) interacts with alpha-maltose 1-phosphate. The active-site Proton donor is E502. Residue 612–613 participates in alpha-maltose 1-phosphate binding; that stretch reads KY.

The protein belongs to the glycosyl hydrolase 13 family. GlgE subfamily. As to quaternary structure, homodimer.

It catalyses the reaction alpha-maltose 1-phosphate + [(1-&gt;4)-alpha-D-glucosyl](n) = [(1-&gt;4)-alpha-D-glucosyl](n+2) + phosphate. In terms of biological role, maltosyltransferase that uses maltose 1-phosphate (M1P) as the sugar donor to elongate linear or branched alpha-(1-&gt;4)-glucans. Is involved in a branched alpha-glucan biosynthetic pathway from trehalose, together with TreS, Mak and GlgB. The protein is Alpha-1,4-glucan:maltose-1-phosphate maltosyltransferase of Bifidobacterium longum (strain NCC 2705).